Here is a 90-residue protein sequence, read N- to C-terminus: Co-chaperonin GroES (90 aa).

This sequence belongs to the GroES chaperonin family. In terms of assembly, heptamer of 7 subunits arranged in a ring. Interacts with the chaperonin GroEL.

Its subcellular location is the cytoplasm. Together with the chaperonin GroEL, plays an essential role in assisting protein folding. The GroEL-GroES system forms a nano-cage that allows encapsulation of the non-native substrate proteins and provides a physical environment optimized to promote and accelerate protein folding. GroES binds to the apical surface of the GroEL ring, thereby capping the opening of the GroEL channel. The chain is Co-chaperonin GroES from Helicobacter hepaticus (strain ATCC 51449 / 3B1).